The chain runs to 117 residues: Photosystem II reaction center Psb28 protein (117 aa).

The protein belongs to the Psb28 family. Part of the photosystem II complex.

It localises to the cellular thylakoid membrane. The polypeptide is Photosystem II reaction center Psb28 protein (Prochlorococcus marinus (strain MIT 9301)).